A 204-amino-acid chain; its full sequence is Tic20 family protein Ycf60 (204 aa).

Helical transmembrane passes span 5–25 (LPSL…SFII), 87–107 (LMPL…IFFI), 133–153 (ILLF…PIEF), and 159–179 (GLMM…YSII).

The protein belongs to the Tic20 family.

The protein localises to the plastid. It is found in the chloroplast membrane. In Gracilaria tenuistipitata var. liui (Red alga), this protein is Tic20 family protein Ycf60 (ycf60).